Reading from the N-terminus, the 1357-residue chain is DNA-directed RNA polymerase subunit beta (1357 aa).

Belongs to the RNA polymerase beta chain family. In terms of assembly, the RNAP catalytic core consists of 2 alpha, 1 beta, 1 beta' and 1 omega subunit. When a sigma factor is associated with the core the holoenzyme is formed, which can initiate transcription.

The catalysed reaction is RNA(n) + a ribonucleoside 5'-triphosphate = RNA(n+1) + diphosphate. DNA-dependent RNA polymerase catalyzes the transcription of DNA into RNA using the four ribonucleoside triphosphates as substrates. The sequence is that of DNA-directed RNA polymerase subunit beta from Pseudomonas syringae pv. syringae (strain B728a).